A 641-amino-acid polypeptide reads, in one-letter code: 1,3-beta-glucanosyltransferase PGA5 (641 aa).

Residues 1–23 form the signal peptide; that stretch reads MTTLSTIWLFLITITAIFQLGLS. Residue Asn-25 is glycosylated (N-linked (GlcNAc...) asparagine). An intrachain disulfide couples Cys-106 to Cys-135. Positions 124, 192, 193, 234, and 239 each coordinate (1,3-beta-D-glucosyl)n. Glu-193 (proton donor) is an active-site residue. Intrachain disulfides connect Cys-248–Cys-390, Cys-276–Cys-307, Cys-424–Cys-474, Cys-426–Cys-528, Cys-433–Cys-498, and Cys-451–Cys-456. The active-site Nucleophile is the Glu-304. Tyr-336 lines the (1,3-beta-D-glucosyl)n pocket. The tract at residues 535 to 613 is disordered; the sequence is KEEEKEVQEE…SPKTSKSIAG (79 aa). The segment covering 571–581 has biased composition (basic and acidic residues); it reads KSKEKEKGKLI. Positions 582 to 593 are enriched in acidic residues; it reads EEEEEEEEEEEE. The segment covering 596–610 has biased composition (polar residues); sequence KTPSSGEKSPKTSKS. Asn-621 is a glycosylation site (N-linked (GlcNAc...) asparagine). Asp-622 is lipidated: GPI-anchor amidated aspartate. Positions 623 to 641 are cleaved as a propeptide — removed in mature form; the sequence is SIWKTFIEILFTCSAAILI.

It belongs to the glycosyl hydrolase 72 family.

Its subcellular location is the cell membrane. Functionally, splits internally a 1,3-beta-glucan molecule and transfers the newly generated reducing end (the donor) to the non-reducing end of another 1,3-beta-glucan molecule (the acceptor) forming a 1,3-beta linkage, resulting in the elongation of 1,3-beta-glucan chains in the cell wall. Involved in spore wall assembly. This chain is 1,3-beta-glucanosyltransferase PGA5 (PGA5), found in Candida albicans (strain SC5314 / ATCC MYA-2876) (Yeast).